We begin with the raw amino-acid sequence, 451 residues long: UDP-N-acetylmuramoylalanine--D-glutamate ligase (451 aa).

119 to 125 (GSNGKTT) is an ATP binding site.

The protein belongs to the MurCDEF family.

Its subcellular location is the cytoplasm. It catalyses the reaction UDP-N-acetyl-alpha-D-muramoyl-L-alanine + D-glutamate + ATP = UDP-N-acetyl-alpha-D-muramoyl-L-alanyl-D-glutamate + ADP + phosphate + H(+). Its pathway is cell wall biogenesis; peptidoglycan biosynthesis. Its function is as follows. Cell wall formation. Catalyzes the addition of glutamate to the nucleotide precursor UDP-N-acetylmuramoyl-L-alanine (UMA). In Streptococcus agalactiae serotype III (strain NEM316), this protein is UDP-N-acetylmuramoylalanine--D-glutamate ligase.